The primary structure comprises 448 residues: Deoxyguanosinetriphosphate triphosphohydrolase-like protein (448 aa).

Residues 1–26 (MQINSSWQERFLADPPREKDHRPPFR) form a disordered region. Basic and acidic residues predominate over residues 11 to 26 (FLADPPREKDHRPPFR). The HD domain maps to 59–272 (RLTHSLEVAQ…MELADDIAYA (214 aa)).

Belongs to the dGTPase family. Type 2 subfamily.

The polypeptide is Deoxyguanosinetriphosphate triphosphohydrolase-like protein (Histophilus somni (strain 129Pt) (Haemophilus somnus)).